The sequence spans 221 residues: Josephin-like protein (221 aa).

A disordered region spans residues 1-37 (MESPSARTLGNSLGDDSGNGNENGNGSGNGNTTMMPH). Over residues 9-20 (LGNSLGDDSGNG) the composition is skewed to low complexity. Residues 36–214 (PHGIYHERQT…DCKDKSQQRW (179 aa)) enclose the Josephin domain. Cys-49 functions as the Nucleophile in the catalytic mechanism. The active-site Proton acceptor is His-152.

It carries out the reaction Thiol-dependent hydrolysis of ester, thioester, amide, peptide and isopeptide bonds formed by the C-terminal Gly of ubiquitin (a 76-residue protein attached to proteins as an intracellular targeting signal).. In terms of biological role, may act as a deubiquitinating enzyme. This chain is Josephin-like protein, found in Drosophila melanogaster (Fruit fly).